A 341-amino-acid polypeptide reads, in one-letter code: Uroporphyrinogen decarboxylase (341 aa).

Residues 23–27 (RQAGR), D73, Y148, S203, and H318 each bind substrate.

The protein belongs to the uroporphyrinogen decarboxylase family. In terms of assembly, homodimer.

The protein localises to the cytoplasm. It carries out the reaction uroporphyrinogen III + 4 H(+) = coproporphyrinogen III + 4 CO2. It participates in porphyrin-containing compound metabolism; protoporphyrin-IX biosynthesis; coproporphyrinogen-III from 5-aminolevulinate: step 4/4. Its function is as follows. Catalyzes the decarboxylation of four acetate groups of uroporphyrinogen-III to yield coproporphyrinogen-III. This chain is Uroporphyrinogen decarboxylase, found in Brucella anthropi (strain ATCC 49188 / DSM 6882 / CCUG 24695 / JCM 21032 / LMG 3331 / NBRC 15819 / NCTC 12168 / Alc 37) (Ochrobactrum anthropi).